A 660-amino-acid polypeptide reads, in one-letter code: uncharacterized protein (660 aa).

A disordered region spans residues 220 to 239 (ADARGQAAAPPQAQAPAPPD). Positions 222 to 239 (ARGQAAAPPQAQAPAPPD) are enriched in low complexity.

This is an uncharacterized protein from Callospermophilus lateralis (Golden-mantled ground squirrel).